A 277-amino-acid polypeptide reads, in one-letter code: Transcription antiterminator LicT (277 aa).

PRD domains follow at residues 65–170 and 171–277; these read DIPI…EEMP and NIIN…VKQA.

It belongs to the transcriptional antiterminator BglG family. In terms of processing, phosphorylated.

Mediates positive regulation of the glucanase operon (licST) by functioning as an antiterminator factor of transcription. Prevents termination at terminator lic-t. This chain is Transcription antiterminator LicT (licT), found in Bacillus subtilis (strain 168).